The chain runs to 391 residues: MAVKKRSIFEEVGQGAKAPVPQGGSIDRGHGGARRGIRLWLMALFLLVMAMIVVGGLTRLTDSGLSITEWRPVTGAVPPLNEAQWAAEFDKYRESPQYRLMNAGMTLAEFQRIYWWEWGHRQLGRVIGLVWAVGFLGFLAARRIPRGWWPRLLALGALGGLQGGIGWWMVASGLEGDKVTVESTRLATHLGLAFIILGLIAWQALLLGRSESDLLQARRQKEGRLVTLTTVLIGVAFLQIVLGALVAGIDAGRGFPTWPDMNGTFLPADMFYVPGVETDWRNPAWWLGLLQNPGFVQFLHRMAGYTLAALGLIFWIFGRRSRHRATRGAFDLLAMALLAQILLGVGTVLSAAEWQVAIAHQVGAVVIWVLILHARHLALYPRVGSIRKGTL.

8 consecutive transmembrane segments (helical) span residues 37 to 57, 121 to 141, 152 to 172, 186 to 206, 229 to 249, 298 to 318, 332 to 352, and 354 to 374; these read IRLWLMALFLLVMAMIVVGGL, RQLGRVIGLVWAVGFLGFLAA, LLALGALGGLQGGIGWWMVAS, LATHLGLAFIILGLIAWQALL, TTVLIGVAFLQIVLGALVAGI, FLHRMAGYTLAALGLIFWIFG, LLAMALLAQILLGVGTVLSAA, and WQVAIAHQVGAVVIWVLILHA. His300 contacts heme. His360 lines the heme pocket.

The protein belongs to the COX15/CtaA family. Type 2 subfamily. In terms of assembly, interacts with CtaB. Heme b serves as cofactor.

The protein localises to the cell membrane. It catalyses the reaction Fe(II)-heme o + 2 A + H2O = Fe(II)-heme a + 2 AH2. It participates in porphyrin-containing compound metabolism; heme A biosynthesis; heme A from heme O: step 1/1. Catalyzes the conversion of heme O to heme A by two successive hydroxylations of the methyl group at C8. The first hydroxylation forms heme I, the second hydroxylation results in an unstable dihydroxymethyl group, which spontaneously dehydrates, resulting in the formyl group of heme A. This is Heme A synthase from Cereibacter sphaeroides (strain ATCC 17029 / ATH 2.4.9) (Rhodobacter sphaeroides).